The sequence spans 243 residues: NAD-dependent protein deacetylase (243 aa).

One can recognise a Deacetylase sirtuin-type domain in the interval 1-243; it reads MRNDLETLKH…VSVVKSLMTE (243 aa). Positions 24, 35, 36, 105, 107, 108, and 123 each coordinate NAD(+). Phenylalanine 35 provides a ligand contact to nicotinamide. Residues isoleucine 107 and aspartate 108 each contribute to the nicotinamide site. Histidine 123 serves as the catalytic Proton acceptor. Residues cysteine 131, cysteine 134, cysteine 151, and cysteine 154 each coordinate Zn(2+). NAD(+) is bound by residues serine 192, serine 193, asparagine 215, and aspartate 232.

Belongs to the sirtuin family. Class U subfamily. Zn(2+) serves as cofactor.

The protein localises to the cytoplasm. The catalysed reaction is N(6)-acetyl-L-lysyl-[protein] + NAD(+) + H2O = 2''-O-acetyl-ADP-D-ribose + nicotinamide + L-lysyl-[protein]. NAD-dependent protein deacetylase which modulates the activities of several enzymes which are inactive in their acetylated form. This is NAD-dependent protein deacetylase from Staphylococcus aureus (strain Mu50 / ATCC 700699).